The sequence spans 260 residues: uncharacterized protein (260 aa).

This is an uncharacterized protein from Caenorhabditis elegans.